The following is a 341-amino-acid chain: NADH-quinone oxidoreductase subunit H 2 (341 aa).

Helical transmembrane passes span 13–33 (IVVIGQSVLLIVVLLISIAYI), 82–102 (GVFLLAPLVTCVLALSAWAVI), 115–135 (VGVLYILAVSSLSVYGIIMAG), 161–181 (IGFVIICVLLCVGSLNLTAIV), 190–210 (VLGWYWLPLFPMFVVFYVSAL), 242–262 (LFVLGEYVAIVTMCAMGTILF), 277–297 (WVPGIVWFALKVLFMFFMFAM), and 317–337 (VFLPLSLAMVVIVAAVLQFAG).

Belongs to the complex I subunit 1 family. In terms of assembly, NDH-1 is composed of 14 different subunits. Subunits NuoA, H, J, K, L, M, N constitute the membrane sector of the complex.

It is found in the cell inner membrane. It carries out the reaction a quinone + NADH + 5 H(+)(in) = a quinol + NAD(+) + 4 H(+)(out). Its function is as follows. NDH-1 shuttles electrons from NADH, via FMN and iron-sulfur (Fe-S) centers, to quinones in the respiratory chain. The immediate electron acceptor for the enzyme in this species is believed to be ubiquinone. Couples the redox reaction to proton translocation (for every two electrons transferred, four hydrogen ions are translocated across the cytoplasmic membrane), and thus conserves the redox energy in a proton gradient. This subunit may bind ubiquinone. This Rhodopseudomonas palustris (strain HaA2) protein is NADH-quinone oxidoreductase subunit H 2.